A 236-amino-acid chain; its full sequence is tRNA (guanine-N(7)-)-methyltransferase (236 aa).

Residues 1-23 are disordered; it reads MEADVQRAQQAQLEKGSSVPPWT. S-adenosyl-L-methionine contacts are provided by D69, E94, N121, and D144. The active site involves D144. Substrate-binding residues include K148 and D180.

This sequence belongs to the class I-like SAM-binding methyltransferase superfamily. TrmB family.

The enzyme catalyses guanosine(46) in tRNA + S-adenosyl-L-methionine = N(7)-methylguanosine(46) in tRNA + S-adenosyl-L-homocysteine. It participates in tRNA modification; N(7)-methylguanine-tRNA biosynthesis. In terms of biological role, catalyzes the formation of N(7)-methylguanine at position 46 (m7G46) in tRNA. The protein is tRNA (guanine-N(7)-)-methyltransferase of Synechococcus sp. (strain JA-3-3Ab) (Cyanobacteria bacterium Yellowstone A-Prime).